The following is a 180-amino-acid chain: Cytidylate kinase (180 aa).

Gly7–Thr15 contributes to the ATP binding site.

Belongs to the cytidylate kinase family. Type 2 subfamily.

The protein resides in the cytoplasm. The catalysed reaction is CMP + ATP = CDP + ADP. The enzyme catalyses dCMP + ATP = dCDP + ADP. The sequence is that of Cytidylate kinase (cmk) from Archaeoglobus fulgidus (strain ATCC 49558 / DSM 4304 / JCM 9628 / NBRC 100126 / VC-16).